The primary structure comprises 242 residues: Immunity protein TsiV2 (242 aa).

3 consecutive transmembrane segments (helical) span residues 39 to 59 (VFGA…FADI), 66 to 86 (FWGF…LFMP), and 118 to 138 (FAWV…PLAF).

The protein localises to the host membrane. Its function is as follows. Immunity protein that plays a role in preventing early activation of toxin VasX. This is Immunity protein TsiV2 from Vibrio cholerae serotype O1 (strain ATCC 39315 / El Tor Inaba N16961).